The following is a 92-amino-acid chain: uncharacterized protein (92 aa).

This is an uncharacterized protein from Pasteurella multocida (strain Pm70).